The following is a 246-amino-acid chain: tRNA (guanine-N(7)-)-methyltransferase (246 aa).

S-adenosyl-L-methionine-binding residues include E77, E102, D129, and D152. The active site involves D152. Substrate contacts are provided by residues K156, D188, and 225 to 228 (TKFE).

It belongs to the class I-like SAM-binding methyltransferase superfamily. TrmB family.

It catalyses the reaction guanosine(46) in tRNA + S-adenosyl-L-methionine = N(7)-methylguanosine(46) in tRNA + S-adenosyl-L-homocysteine. It functions in the pathway tRNA modification; N(7)-methylguanine-tRNA biosynthesis. Functionally, catalyzes the formation of N(7)-methylguanine at position 46 (m7G46) in tRNA. The sequence is that of tRNA (guanine-N(7)-)-methyltransferase from Haemophilus influenzae (strain PittGG).